A 206-amino-acid polypeptide reads, in one-letter code: MALRDLSSSLSSSSSPELHVLAVDDSFVDRKVIERLLKISACKVTTVESGTRALQYLGLDGDNGSSGLKDLKVNLIVTDYSMPGLTGYELLKKIKESSALREIPVVIMSSENIQPRIEQCMIEGAEEFLLKPVKLADVKRLKELIMRGGEAEEGKTKKLSPKRILQNDIDSSPSSSSTSSSSSSHDVSSLDDDTPSSKRIKLESRG.

In terms of domain architecture, Response regulatory spans 19–146; it reads HVLAVDDSFV…DVKRLKELIM (128 aa). 4-aspartylphosphate is present on Asp79. The tract at residues 151 to 206 is disordered; the sequence is AEEGKTKKLSPKRILQNDIDSSPSSSSTSSSSSSHDVSSLDDDTPSSKRIKLESRG. Residues 168–187 show a composition bias toward low complexity; that stretch reads DIDSSPSSSSTSSSSSSHDV.

This sequence belongs to the ARR family. Type-A subfamily. Two-component system major event consists of a His-to-Asp phosphorelay between a sensor histidine kinase (HK) and a response regulator (RR). In plants, the His-to-Asp phosphorelay involves an additional intermediate named Histidine-containing phosphotransfer protein (HPt). This multistep phosphorelay consists of a His-Asp-His-Asp sequential transfer of a phosphate group between first a His and an Asp of the HK protein, followed by the transfer to a conserved His of the HPt protein and finally the transfer to an Asp in the receiver domain of the RR protein.

Its subcellular location is the nucleus. Functionally, functions as a response regulator involved in His-to-Asp phosphorelay signal transduction system. Phosphorylation of the Asp residue in the receiver domain activates the ability of the protein to promote the transcription of target genes. Type-A response regulators seem to act as negative regulators of the cytokinin signaling. The sequence is that of Two-component response regulator ARR15 (ARR15) from Arabidopsis thaliana (Mouse-ear cress).